The chain runs to 516 residues: MTKVETRLEILDVTLRDGEQTRGVSFSTSEKLNIAKFLLQKLNVDRVEIASARVSKGELETVQKIMEWAATEQLTERIEILGFVDGNKTVDWIKDSGAKVLNLLTKGSLHHLEKQLGKTPKEFFTDVSFVIEYAIKSGLKINVYLEDWSNGFRNSPDYVKSLVEHLSKEHIERIFLPDTLGVLSPEETFQGVDSLIQKYPDIHFEFHGHNDYDLSVANSLQAIRAGVKGLHASINGLGERAGNTPLEALVTTIHDKSNSKTNINEIAITEASRLVEVFSGKRISANRPIVGEDVFTQTAGVHADGDKKGNLYANPILPERFGRKRSYALGKLAGKASISENVKQLGMVLSEVVLQKVLERVIELGDQNKLVTPEDLPFIIADVSGRTGEKVLTIKSCNIHSGIGIRPHAQIELEYQGKIHKEISEGDGGYDAFMNALTKITNRLGISIPKLIDYEVRIPPGGKTDALVETRITWNKSLDLEEDQTFKTMGVHPDQTVAAVHATEKMLNQILQPWQI.

The Pyruvate carboxyltransferase domain maps to 8–269; that stretch reads LEILDVTLRD…KTNINEIAIT (262 aa). Catalysis depends on R16, which acts as the Proton donor. Pyruvate contacts are provided by residues 16–17 and Y144; that span reads RD. D17 is a binding site for Mn(2+). E146 serves as the catalytic Proton acceptor. A pyruvate-binding site is contributed by T179. Mn(2+) contacts are provided by H207 and H209.

Belongs to the alpha-IPM synthase/homocitrate synthase family. As to quaternary structure, homodimer. The cofactor is Mn(2+).

The enzyme catalyses pyruvate + acetyl-CoA + H2O = (3R)-citramalate + CoA + H(+). It participates in amino-acid biosynthesis; L-isoleucine biosynthesis; 2-oxobutanoate from pyruvate: step 1/3. Regulated by the end-product isoleucine via a feedback inhibition. The binding of isoleucine has inhibitory effects on the binding of both pyruvate and acetyl-CoA. May act via conformational change of the dimer interface of the regulatory domain, leading to inhibition of the catalytic reaction. Catalyzes the condensation of pyruvate and acetyl-coenzyme A to form (R)-citramalate. Shows strict substrate specificity for pyruvate. Cannot use alpha-ketoisovalerate, alpha-ketobutyrate, alpha-ketoisocaproate, alpha-ketoglutarate or glyoxylate. This is (R)-citramalate synthase CimA from Leptospira interrogans serogroup Icterohaemorrhagiae serovar Lai (strain 56601).